Consider the following 402-residue polypeptide: Multidrug resistance protein MdtH (402 aa).

The Cytoplasmic portion of the chain corresponds to 1-12 (MSRVSQARNLGK). A helical transmembrane segment spans residues 13–33 (YFLLIDNMLVVLGFFVVFPLI). Over 34 to 98 (SIRFVDQMGW…GFATMGIAHE (65 aa)) the chain is Periplasmic. The chain crosses the membrane as a helical span at residues 99–116 (PWLLWFSCLLSGLGGTLF). Topologically, residues 117–138 (DPPRSALVVKLIRPQQRGRFFS) are cytoplasmic. Residues 139–159 (LLMMQDSAGAVIGALLGSWLL) traverse the membrane as a helical segment. The Periplasmic segment spans residues 160–164 (QYDFR). A helical transmembrane segment spans residues 165 to 185 (LVCATGAVLFVLCAAFNAWLL). Residues 186-213 (PAWKLSTVRTPVREGMTRVMRDKRFVTY) are Cytoplasmic-facing. The helical transmembrane segment at 214–234 (VLTLAGYYMLAVQVMLMLPIM) threads the bilayer. Over 235–243 (VNDVAGAPS) the chain is Periplasmic. The chain crosses the membrane as a helical span at residues 244–264 (AVKWMYAIEACLSLTLLYPIA). The Cytoplasmic portion of the chain corresponds to 265–276 (RWSEKHFRLEHR). A helical transmembrane segment spans residues 277-297 (LMAGLLIMSLSMMPVGMVSGL). The Periplasmic portion of the chain corresponds to 298–299 (QQ). Residues 300 to 320 (LFTLICLFYIGSIIAEPARET) form a helical membrane-spanning segment. Residues 321-339 (LSASLADARARGSYMGFSR) are Cytoplasmic-facing. Residues 340–360 (LGLAIGGAIGYIGGGWLFDLG) form a helical membrane-spanning segment. Topologically, residues 361-367 (KSAHQPE) are periplasmic. The helical transmembrane segment at 368–388 (LPWMMLGIIGIFTFLALGWQF) threads the bilayer. Over 389 to 402 (SQKRTARRLLERDA) the chain is Cytoplasmic.

This sequence belongs to the major facilitator superfamily. DHA1 family. MdtH (TC 2.A.1.2.21) subfamily.

Its subcellular location is the cell inner membrane. Its function is as follows. Confers resistance to norfloxacin and enoxacin. The protein is Multidrug resistance protein MdtH of Escherichia coli O7:K1 (strain IAI39 / ExPEC).